The following is a 174-amino-acid chain: NADH-ubiquinone oxidoreductase chain 6 (174 aa).

Helical transmembrane passes span 1–21, 24–44, 47–67, 86–106, 111–131, and 151–171; these read MTYA…GFSS, SPIY…AVIL, GGGY…MVVF, AEVL…VLWV, GVVV…EGEG, and WLVV…IEIA.

The protein belongs to the complex I subunit 6 family. In terms of assembly, core subunit of respiratory chain NADH dehydrogenase (Complex I) which is composed of 45 different subunits.

It localises to the mitochondrion inner membrane. The enzyme catalyses a ubiquinone + NADH + 5 H(+)(in) = a ubiquinol + NAD(+) + 4 H(+)(out). Core subunit of the mitochondrial membrane respiratory chain NADH dehydrogenase (Complex I) which catalyzes electron transfer from NADH through the respiratory chain, using ubiquinone as an electron acceptor. Essential for the catalytic activity and assembly of complex I. In Pongo pygmaeus (Bornean orangutan), this protein is NADH-ubiquinone oxidoreductase chain 6 (MT-ND6).